The following is a 320-amino-acid chain: MSFAATTKKELTQLETDLCCSKAELAALIRMNGSLSFVNKQLGLDVTTENAAIARRIYTLIKKVFPMMFVELLVRKKMRLKKNNVYLVRLKQEAETLLKELKIIGEGFQIHRTISTDIVSATCCRRAYLRGAFLAGGSINHPETSSYHLEIFSLYEEHNESLCELMNSFQLNAKKLERKKGFITYIKESEKITEFLNIIGAHQALLYFEDVRIMKDMRNSVNRLVNCETANLNKTVGAALRQVENIKFLDQEIGLDALPTKLREIAELRLKHQDVTLKELGEMVESGKVSKSGVNHRLRKIDELAEKLRAGVPAESSSPR.

Residues 276–310 (TLKELGEMVESGKVSKSGVNHRLRKIDELAEKLRA) constitute a DNA-binding region (H-T-H motif).

The protein belongs to the WhiA family.

Involved in cell division and chromosome segregation. In Halalkalibacterium halodurans (strain ATCC BAA-125 / DSM 18197 / FERM 7344 / JCM 9153 / C-125) (Bacillus halodurans), this protein is Probable cell division protein WhiA.